A 189-amino-acid polypeptide reads, in one-letter code: Thermostable direct hemolysin 2 (189 aa).

A signal peptide spans 1–24; the sequence is MKYRYFAKKSFLFISMLAAFKTFA. Cys-175 and Cys-185 form a disulfide bridge.

Belongs to the TDH hemolysin family. In terms of assembly, homodimer.

In terms of biological role, bacterial hemolysins are exotoxins that attack blood cell membranes and cause cell rupture by mechanisms not clearly defined. The protein is Thermostable direct hemolysin 2 (tdh2) of Vibrio parahaemolyticus serotype O3:K6 (strain RIMD 2210633).